Reading from the N-terminus, the 348-residue chain is Holliday junction branch migration complex subunit RuvB (348 aa).

A large ATPase domain (RuvB-L) region spans residues 1–183 (MTDPSRLVTP…FGIPVRLNFY (183 aa)). ATP contacts are provided by residues leucine 22, arginine 23, glycine 64, lysine 67, threonine 68, threonine 69, 130–132 (EDF), arginine 173, tyrosine 183, and arginine 220. Threonine 68 contributes to the Mg(2+) binding site. A small ATPAse domain (RuvB-S) region spans residues 184 to 254 (TIEELESIVS…IADHALGALE (71 aa)). The tract at residues 257–348 (AAGLDAMDRR…FGLFGGEEEA (92 aa)) is head domain (RuvB-H). Residues arginine 293, arginine 312, and arginine 317 each coordinate DNA.

The protein belongs to the RuvB family. As to quaternary structure, homohexamer. Forms an RuvA(8)-RuvB(12)-Holliday junction (HJ) complex. HJ DNA is sandwiched between 2 RuvA tetramers; dsDNA enters through RuvA and exits via RuvB. An RuvB hexamer assembles on each DNA strand where it exits the tetramer. Each RuvB hexamer is contacted by two RuvA subunits (via domain III) on 2 adjacent RuvB subunits; this complex drives branch migration. In the full resolvosome a probable DNA-RuvA(4)-RuvB(12)-RuvC(2) complex forms which resolves the HJ.

The protein resides in the cytoplasm. It carries out the reaction ATP + H2O = ADP + phosphate + H(+). Its function is as follows. The RuvA-RuvB-RuvC complex processes Holliday junction (HJ) DNA during genetic recombination and DNA repair, while the RuvA-RuvB complex plays an important role in the rescue of blocked DNA replication forks via replication fork reversal (RFR). RuvA specifically binds to HJ cruciform DNA, conferring on it an open structure. The RuvB hexamer acts as an ATP-dependent pump, pulling dsDNA into and through the RuvAB complex. RuvB forms 2 homohexamers on either side of HJ DNA bound by 1 or 2 RuvA tetramers; 4 subunits per hexamer contact DNA at a time. Coordinated motions by a converter formed by DNA-disengaged RuvB subunits stimulates ATP hydrolysis and nucleotide exchange. Immobilization of the converter enables RuvB to convert the ATP-contained energy into a lever motion, pulling 2 nucleotides of DNA out of the RuvA tetramer per ATP hydrolyzed, thus driving DNA branch migration. The RuvB motors rotate together with the DNA substrate, which together with the progressing nucleotide cycle form the mechanistic basis for DNA recombination by continuous HJ branch migration. Branch migration allows RuvC to scan DNA until it finds its consensus sequence, where it cleaves and resolves cruciform DNA. The protein is Holliday junction branch migration complex subunit RuvB of Rhodopseudomonas palustris (strain HaA2).